A 143-amino-acid chain; its full sequence is MRLEKSLVLIKPDAVERNLIGKILEVYEGAGLKIKAMEMKQINKDFAEKHYEEHRDKQFFNSLIKYITRSPLVALILEGEDAIDKIRSLNGATNPEKAEFGTIRRRFALSGTENSVHASDSIESAEKEIKLWFPKVFYEEICG.

ATP-binding residues include K11, F59, R87, T93, R104, and N114. H117 functions as the Pros-phosphohistidine intermediate in the catalytic mechanism.

Belongs to the NDK family. In terms of assembly, homotetramer. Mg(2+) serves as cofactor.

Its subcellular location is the cytoplasm. The enzyme catalyses a 2'-deoxyribonucleoside 5'-diphosphate + ATP = a 2'-deoxyribonucleoside 5'-triphosphate + ADP. The catalysed reaction is a ribonucleoside 5'-diphosphate + ATP = a ribonucleoside 5'-triphosphate + ADP. Its function is as follows. Major role in the synthesis of nucleoside triphosphates other than ATP. The ATP gamma phosphate is transferred to the NDP beta phosphate via a ping-pong mechanism, using a phosphorylated active-site intermediate. This chain is Nucleoside diphosphate kinase, found in Clostridium perfringens (strain SM101 / Type A).